Reading from the N-terminus, the 172-residue chain is Small ribosomal subunit protein uS5 (172 aa).

Positions L17–V80 constitute an S5 DRBM domain.

It belongs to the universal ribosomal protein uS5 family. Part of the 30S ribosomal subunit. Contacts proteins S4 and S8.

Functionally, with S4 and S12 plays an important role in translational accuracy. Its function is as follows. Located at the back of the 30S subunit body where it stabilizes the conformation of the head with respect to the body. This Cupriavidus metallidurans (strain ATCC 43123 / DSM 2839 / NBRC 102507 / CH34) (Ralstonia metallidurans) protein is Small ribosomal subunit protein uS5.